A 968-amino-acid chain; its full sequence is Leucine--tRNA ligase (968 aa).

The span at 1 to 13 (MTETPTGTQSSRE) shows a compositional bias: polar residues. The disordered stretch occupies residues 1-22 (MTETPTGTQSSRETAADDTPRH). Positions 75-86 (PYPSGEGLHVGH) match the 'HIGH' region motif. A 'KMSKS' region motif is present at residues 741–745 (KIGKS). Residue lysine 744 participates in ATP binding.

It belongs to the class-I aminoacyl-tRNA synthetase family.

It is found in the cytoplasm. It catalyses the reaction tRNA(Leu) + L-leucine + ATP = L-leucyl-tRNA(Leu) + AMP + diphosphate. In Mycolicibacterium vanbaalenii (strain DSM 7251 / JCM 13017 / BCRC 16820 / KCTC 9966 / NRRL B-24157 / PYR-1) (Mycobacterium vanbaalenii), this protein is Leucine--tRNA ligase.